A 221-amino-acid polypeptide reads, in one-letter code: tRNA (guanine-N(7)-)-methyltransferase (221 aa).

S-adenosyl-L-methionine contacts are provided by Glu-43, Glu-68, and Asp-123. Asp-123 is an active-site residue. Substrate-binding positions include Lys-127, Asp-159, and 199–202 (TEYE).

Belongs to the class I-like SAM-binding methyltransferase superfamily. TrmB family.

It catalyses the reaction guanosine(46) in tRNA + S-adenosyl-L-methionine = N(7)-methylguanosine(46) in tRNA + S-adenosyl-L-homocysteine. It functions in the pathway tRNA modification; N(7)-methylguanine-tRNA biosynthesis. Its function is as follows. Catalyzes the formation of N(7)-methylguanine at position 46 (m7G46) in tRNA. The protein is tRNA (guanine-N(7)-)-methyltransferase of Mycoplasma mycoides subsp. mycoides SC (strain CCUG 32753 / NCTC 10114 / PG1).